The primary structure comprises 301 residues: Transmembrane protein 178A (301 aa).

An N-terminal signal peptide occupies residues 1-25; the sequence is MEKRALVTAISLSMSLLALMLLVTA. At 26–183 the chain is on the extracellular side; the sequence is IFTDHWYETD…LLHLRRITAG (158 aa). An N-linked (GlcNAc...) asparagine glycan is attached at asparagine 162. A helical transmembrane segment spans residues 184–204; the sequence is FLGMAAAVMLCGSIVAAVGFF. Topologically, residues 205-215 are cytoplasmic; it reads WEESLTQHVSG. A helical transmembrane segment spans residues 216-236; it reads LLFLMAGIFCTISLCTYAASV. The Extracellular segment spans residues 237–258; it reads SYDLSRNPPFIYGLPSDVDHGY. Residues 259-279 traverse the membrane as a helical segment; sequence GWSIFCAWVSLGLTVASGCIC. At 280-301 the chain is on the cytoplasmic side; that stretch reads TTYPFLSRTKALRSKTARESSV.

Belongs to the TMEM178 family.

The protein localises to the endoplasmic reticulum membrane. In terms of biological role, may act as a negative regulator of osteoclast differentiation. The chain is Transmembrane protein 178A (tmem178a) from Danio rerio (Zebrafish).